Here is a 744-residue protein sequence, read N- to C-terminus: Vesicle-fusing ATPase (744 aa).

An N6-acetyllysine modification is found at K105. S207 is subject to Phosphoserine. Y259 is modified (phosphotyrosine). Residues 505–510 (NGIIKW) and 545–552 (PHSGKTAL) each bind ATP. T550 is a binding site for Mg(2+). S569 carries the phosphoserine; by CDK16 modification.

It belongs to the AAA ATPase family. In terms of assembly, homohexamer. Interacts with GABARAP and GABARAPL2. Interacts with GRIA2. Interacts with PLK2, leading to disrupt the interaction with GRIA2. Interacts with MUSK; may regulate MUSK endocytosis and activity. Interacts with CDK16. Mg(2+) is required as a cofactor. Phosphorylation at Ser-569 interferes with homohexamerization.

It is found in the cytoplasm. The enzyme catalyses ATP + H2O = ADP + phosphate + H(+). Functionally, required for vesicle-mediated transport. Catalyzes the fusion of transport vesicles within the Golgi cisternae. Is also required for transport from the endoplasmic reticulum to the Golgi stack. Seems to function as a fusion protein required for the delivery of cargo proteins to all compartments of the Golgi stack independent of vesicle origin. Interaction with AMPAR subunit GRIA2 leads to influence GRIA2 membrane cycling. In Cricetulus griseus (Chinese hamster), this protein is Vesicle-fusing ATPase (NSF).